A 288-amino-acid polypeptide reads, in one-letter code: 4-diphosphocytidyl-2-C-methyl-D-erythritol kinase (288 aa).

The active site involves Lys-13. Position 96–106 (96–106 (PIGGGIGGGSS)) interacts with ATP. Asp-138 is a catalytic residue.

It belongs to the GHMP kinase family. IspE subfamily.

The enzyme catalyses 4-CDP-2-C-methyl-D-erythritol + ATP = 4-CDP-2-C-methyl-D-erythritol 2-phosphate + ADP + H(+). It participates in isoprenoid biosynthesis; isopentenyl diphosphate biosynthesis via DXP pathway; isopentenyl diphosphate from 1-deoxy-D-xylulose 5-phosphate: step 3/6. Its function is as follows. Catalyzes the phosphorylation of the position 2 hydroxy group of 4-diphosphocytidyl-2C-methyl-D-erythritol. This Aliivibrio salmonicida (strain LFI1238) (Vibrio salmonicida (strain LFI1238)) protein is 4-diphosphocytidyl-2-C-methyl-D-erythritol kinase.